The chain runs to 282 residues: 4-diphosphocytidyl-2-C-methyl-D-erythritol kinase (282 aa).

The active site involves K11. ATP is bound at residue 93 to 103; that stretch reads LVSAGLAGGSA. D133 is an active-site residue.

The protein belongs to the GHMP kinase family. IspE subfamily.

The enzyme catalyses 4-CDP-2-C-methyl-D-erythritol + ATP = 4-CDP-2-C-methyl-D-erythritol 2-phosphate + ADP + H(+). Its pathway is isoprenoid biosynthesis; isopentenyl diphosphate biosynthesis via DXP pathway; isopentenyl diphosphate from 1-deoxy-D-xylulose 5-phosphate: step 3/6. Functionally, catalyzes the phosphorylation of the position 2 hydroxy group of 4-diphosphocytidyl-2C-methyl-D-erythritol. The chain is 4-diphosphocytidyl-2-C-methyl-D-erythritol kinase from Ehrlichia chaffeensis (strain ATCC CRL-10679 / Arkansas).